The primary structure comprises 255 residues: NAD kinase (255 aa).

Asp-44 serves as the catalytic Proton acceptor. NAD(+) contacts are provided by residues 44–45 (DG), His-49, 114–115 (NE), Asp-144, Ala-152, 155–160 (SAYNLS), and Gln-216.

The protein belongs to the NAD kinase family. A divalent metal cation is required as a cofactor.

The protein resides in the cytoplasm. The catalysed reaction is NAD(+) + ATP = ADP + NADP(+) + H(+). Involved in the regulation of the intracellular balance of NAD and NADP, and is a key enzyme in the biosynthesis of NADP. Catalyzes specifically the phosphorylation on 2'-hydroxyl of the adenosine moiety of NAD to yield NADP. The polypeptide is NAD kinase (Rickettsia peacockii (strain Rustic)).